A 286-amino-acid polypeptide reads, in one-letter code: Thymidylate synthase (286 aa).

Residue arginine 27 coordinates dUMP. Residue histidine 57 participates in (6R)-5,10-methylene-5,6,7,8-tetrahydrofolate binding. 148 to 149 contacts dUMP; that stretch reads RR. Catalysis depends on cysteine 168, which acts as the Nucleophile. Residues 188-191, asparagine 199, and 229-231 each bind dUMP; these read RSAD and HLY. Aspartate 191 contacts (6R)-5,10-methylene-5,6,7,8-tetrahydrofolate. A (6R)-5,10-methylene-5,6,7,8-tetrahydrofolate-binding site is contributed by alanine 285.

Belongs to the thymidylate synthase family. Bacterial-type ThyA subfamily. As to quaternary structure, homodimer.

The protein localises to the cytoplasm. The catalysed reaction is dUMP + (6R)-5,10-methylene-5,6,7,8-tetrahydrofolate = 7,8-dihydrofolate + dTMP. It participates in pyrimidine metabolism; dTTP biosynthesis. Catalyzes the reductive methylation of 2'-deoxyuridine-5'-monophosphate (dUMP) to 2'-deoxythymidine-5'-monophosphate (dTMP) while utilizing 5,10-methylenetetrahydrofolate (mTHF) as the methyl donor and reductant in the reaction, yielding dihydrofolate (DHF) as a by-product. This enzymatic reaction provides an intracellular de novo source of dTMP, an essential precursor for DNA biosynthesis. This is Thymidylate synthase from Psychrobacter sp. (strain PRwf-1).